The chain runs to 376 residues: 1-deoxy-D-xylulose 5-phosphate reductoisomerase (376 aa).

Positions 12, 13, 14, 15, 39, 40, and 110 each coordinate NADPH. 1-deoxy-D-xylulose 5-phosphate is bound at residue Lys-111. Glu-112 provides a ligand contact to NADPH. Asp-136 is a binding site for Mn(2+). 1-deoxy-D-xylulose 5-phosphate contacts are provided by Ser-137, Glu-138, Ser-162, and His-185. Glu-138 lines the Mn(2+) pocket. Gly-191 provides a ligand contact to NADPH. 1-deoxy-D-xylulose 5-phosphate contacts are provided by Ser-198, Asn-203, Lys-204, and Glu-207. A Mn(2+)-binding site is contributed by Glu-207.

It belongs to the DXR family. It depends on Mg(2+) as a cofactor. Requires Mn(2+) as cofactor.

It carries out the reaction 2-C-methyl-D-erythritol 4-phosphate + NADP(+) = 1-deoxy-D-xylulose 5-phosphate + NADPH + H(+). The protein operates within isoprenoid biosynthesis; isopentenyl diphosphate biosynthesis via DXP pathway; isopentenyl diphosphate from 1-deoxy-D-xylulose 5-phosphate: step 1/6. Catalyzes the NADPH-dependent rearrangement and reduction of 1-deoxy-D-xylulose-5-phosphate (DXP) to 2-C-methyl-D-erythritol 4-phosphate (MEP). In Treponema pallidum (strain Nichols), this protein is 1-deoxy-D-xylulose 5-phosphate reductoisomerase.